The sequence spans 217 residues: Small ribosomal subunit protein uS3 (217 aa).

The KH type-2 domain maps to 24–93; it reads IKEFLEYKLS…NPQIDVIDVS (70 aa).

It belongs to the universal ribosomal protein uS3 family. As to quaternary structure, part of the 30S ribosomal subunit.

Binds the lower part of the 30S subunit head. This Pyrobaculum islandicum (strain DSM 4184 / JCM 9189 / GEO3) protein is Small ribosomal subunit protein uS3.